A 144-amino-acid chain; its full sequence is Ethylene-responsive transcription factor ERF019 (144 aa).

Positions 13 to 72 (KYKGIRRRKWGKWVSEIRVPGTRDRLWLGSFSTAEGAAVAHDVAFFCLHQPDSLESLNFP) form a DNA-binding region, AP2/ERF.

Belongs to the AP2/ERF transcription factor family. ERF subfamily.

It localises to the nucleus. In terms of biological role, probably acts as a transcriptional activator. Binds to the GCC-box pathogenesis-related promoter element. May be involved in the regulation of gene expression by stress factors and by components of stress signal transduction pathways. This is Ethylene-responsive transcription factor ERF019 (ERF019) from Arabidopsis thaliana (Mouse-ear cress).